A 198-amino-acid polypeptide reads, in one-letter code: Superoxide dismutase [Fe] (198 aa).

Residues histidine 27, histidine 74, aspartate 157, and histidine 161 each coordinate Fe(3+).

This sequence belongs to the iron/manganese superoxide dismutase family. As to quaternary structure, homodimer. It depends on Fe(3+) as a cofactor.

The enzyme catalyses 2 superoxide + 2 H(+) = H2O2 + O2. Its function is as follows. Destroys superoxide anion radicals which are normally produced within the cells and which are toxic to biological systems. The protein is Superoxide dismutase [Fe] (sodB) of Pseudomonas putida (Arthrobacter siderocapsulatus).